The primary structure comprises 490 residues: Myocilin (490 aa).

Positions 1–18 (MPAVQLLLLACLLGGVGA) are cleaved as a signal peptide. Residues 51 to 170 (GQAMLAIQEL…QEVASLRRGQ (120 aa)) adopt a coiled-coil conformation. Residues 152-186 (LARRLESSSQEVASLRRGQCPQAHSSSQDVPSGSR) are disordered. Positions 173–182 (QAHSSSQDVP) are enriched in polar residues. The region spanning 230 to 489 (GCGELVWVGE…MVSYDIKLSR (260 aa)) is the Olfactomedin-like domain. Cys-231 and Cys-419 are disulfide-bonded. Ca(2+)-binding residues include Asp-366, Asn-414, Ala-415, Ile-463, and Asp-464. A Microbody targeting signal motif is present at residues 488–490 (SRL).

As to quaternary structure, homodimer (via N-terminus). Can also form higher oligomers. Interacts with OLFM3, FN1, NRCAM, GLDN and NFASC. Interacts (via N-terminus) with MYL2. Interacts with SFRP1, FRZB, FZD7, FZD10, FZD1 and WIF1; regulates Wnt signaling. Interacts with SNTA1; regulates muscle hypertrophy. Interacts with ERBB2 and ERBB3; activates ERBB2-ERBB3 signaling pathway. Interacts with SNCG; affects its secretion and its aggregation. Post-translationally, palmitoylated. Undergoes a calcium-dependent proteolytic cleavage at Gln-212 by CAPN2 in the endoplasmic reticulum. The result is the production of two fragments, one of 35 kDa containing the C-terminal olfactomedin-like domain, and another of 20 kDa containing the N-terminal leucine zipper-like domain. In terms of processing, glycosylated. As to expression, the myocilin 35 kDa fragment is detected in iris and ciliary body.

It localises to the secreted. It is found in the golgi apparatus. The protein resides in the cytoplasmic vesicle. Its subcellular location is the extracellular space. The protein localises to the extracellular matrix. It localises to the extracellular exosome. It is found in the mitochondrion. The protein resides in the mitochondrion intermembrane space. Its subcellular location is the mitochondrion inner membrane. The protein localises to the mitochondrion outer membrane. It localises to the rough endoplasmic reticulum. It is found in the cell projection. The protein resides in the cilium. Its subcellular location is the endoplasmic reticulum. Secreted glycoprotein regulating the activation of different signaling pathways in adjacent cells to control different processes including cell adhesion, cell-matrix adhesion, cytoskeleton organization and cell migration. Promotes substrate adhesion, spreading and formation of focal contacts. Negatively regulates cell-matrix adhesion and stress fiber assembly through Rho protein signal transduction. Modulates the organization of actin cytoskeleton by stimulating the formation of stress fibers through interactions with components of Wnt signaling pathways. Promotes cell migration through activation of PTK2 and the downstream phosphatidylinositol 3-kinase signaling. Plays a role in bone formation and promotes osteoblast differentiation in a dose-dependent manner through mitogen-activated protein kinase signaling. Mediates myelination in the peripheral nervous system through ERBB2/ERBB3 signaling. Plays a role as a regulator of muscle hypertrophy through the components of dystrophin-associated protein complex. Involved in positive regulation of mitochondrial depolarization. Plays a role in neurite outgrowth. May participate in the obstruction of fluid outflow in the trabecular meshwork. The polypeptide is Myocilin (MYOC) (Bos taurus (Bovine)).